The chain runs to 583 residues: MPKPINVRVTTMDAELEFAIQPNTTGKQLFDQVVKTVGLREVWFFGLQYVDSKGYSTWLKLNKKVTQQDVKKENPLQFKFRAKFFPEDVSEELIQEITQRLFFLQVKEAILNDEIYCPPETAVLLASYAVQAKYGDYNKEIHKPGYLANDRLLPQRVLEQHKLTKEQWEERIQNWHEEHRGMLREDSMMEYLKIAQDLEMYGVNYFEIKNKKGTELWLGVDALGLNIYEHDDKLTPKIGFPWSEIRNISFNDKKFVIKPIDKKAPDFVFYAPRLRINKRILALCMGNHELYMRRRKPDTIEVQQMKAQAREEKHQKQLERAQLENEKKKREIAEKEKERIEREKEELMERLRQIEEQTMKAQKELEEQTRKALELDQERKRAKEEAERLEKERQAAEEAKSALAKQAADQMKNQEQLAAELAEFTAKIALLEEAKKKKEEEATEWQHKAFAAQEDLEKTKEELKTVMSAPPPPPPPPVIPPTENEHDEHDENNAEASAELSNDGVMNHRSEEERVTETQKNERVKKQLQALSSELAQARDETKKTQNDVLHAENVKAGRDKYKTLRQIRQGNTKQRIDEFEAM.

Residues 5–295 (INVRVTTMDA…GNHELYMRRR (291 aa)) enclose the FERM domain. Position 60–63 (60–63 (KLNK)) interacts with a 1,2-diacyl-sn-glycero-3-phospho-(1D-myo-inositol). Lys-83 carries the N6-succinyllysine modification. Lys-278 provides a ligand contact to a 1,2-diacyl-sn-glycero-3-phospho-(1D-myo-inositol). Disordered stretches follow at residues 309–336 (AREEKHQKQLERAQLENEKKKREIAEKE), 374–407 (ELDQERKRAKEEAERLEKERQAAEEAKSALAKQA), and 460–526 (KEEL…RVKK). Residues 374-400 (ELDQERKRAKEEAERLEKERQAAEEAK) are compositionally biased toward basic and acidic residues. The segment covering 469 to 480 (APPPPPPPPVIP) has biased composition (pro residues). Composition is skewed to basic and acidic residues over residues 483 to 492 (ENEHDEHDEN) and 506 to 525 (MNHRSEEERVTETQKNERVK). Position 564 is a phosphothreonine; by ROCK2 (Thr-564).

Interacts with CPNE1 (via VWFA domain) and CPNE4 (via VWFA domain). Binds NHERF1. Interacts with NHERF1, NHERF2, LAYN, MME/NEP and ICAM2. Interacts (via FERM domain) with SPN/CD43 cytoplasmic tail. Interacts with CD44. Interacts with CLIC5; may work together in a complex which also includes EZR and MYO6 to stabilize linkages between the plasma membrane and subjacent actin cytoskeleton at the base of stereocilia. Phosphorylated by tyrosine-protein kinases. Phosphorylation by ROCK2 suppresses the head-to-tail association of the N-terminal and C-terminal halves resulting in an opened conformation which is capable of actin and membrane-binding.

Its subcellular location is the cell membrane. The protein localises to the cytoplasm. It localises to the cytoskeleton. The protein resides in the cleavage furrow. It is found in the cell projection. Its subcellular location is the microvillus. The protein localises to the stereocilium. Its activity is regulated as follows. A head-to-tail association, of the N-terminal and C-terminal halves results in a closed conformation (inactive form) which is incapable of actin or membrane-binding. Probably plays a crucial role in the binding of the barbed end of actin filaments to the plasma membrane. In Bos taurus (Bovine), this protein is Radixin (RDX).